The primary structure comprises 156 residues: Putative pre-16S rRNA nuclease (156 aa).

This sequence belongs to the YqgF nuclease family.

It localises to the cytoplasm. Its function is as follows. Could be a nuclease involved in processing of the 5'-end of pre-16S rRNA. The protein is Putative pre-16S rRNA nuclease of Ehrlichia canis (strain Jake).